Here is a 261-residue protein sequence, read N- to C-terminus: Sulfur carrier protein FdhD (261 aa).

C105 functions as the Cysteine persulfide intermediate in the catalytic mechanism. Residue 245–250 (FIRGDR) coordinates Mo-bis(molybdopterin guanine dinucleotide).

This sequence belongs to the FdhD family.

The protein localises to the cytoplasm. In terms of biological role, required for formate dehydrogenase (FDH) activity. Acts as a sulfur carrier protein that transfers sulfur from IscS to the molybdenum cofactor prior to its insertion into FDH. This Listeria monocytogenes serovar 1/2a (strain ATCC BAA-679 / EGD-e) protein is Sulfur carrier protein FdhD.